Reading from the N-terminus, the 509-residue chain is Nucleoprotein (509 aa).

The interval 1 to 404 (MSSVLKAYER…ANTLAKLTTA (404 aa)) is ncore. RNA contacts are provided by K180, R195, Y260, Y350, and R354. A ntail region spans residues 405–509 (NRGADTRGGV…LNAALGDLDI (105 aa)). Residues 452-477 (GTHDDEMPPLEEEEEDDTSAGPRTGP) form a disordered region. The span at 458–469 (MPPLEEEEEDDT) shows a compositional bias: acidic residues.

It belongs to the paramyxoviruses nucleocapsid family. In terms of assembly, homomultimer; forms the nucleocapsid. Binds to the viral genomic RNA. N0 interacts with the phosphoprotein (via N-terminus); this interaction allows P to chaperon N0 to avoid N polymerization before encapsidation. Interacts as N-RNA template with the phosphoprotein (via C-terminus); this interaction positions the polymerase on the template.

The protein localises to the virion. Its subcellular location is the host cytoplasm. Forms the helical nucleocapsid (NC), protecting the genome from nucleases. The encapsidated genomic RNA serves as template for transcription and replication; encapsidation by N is coupled to RNA synthesis. Forms the encapsidation complex with the phosphoprotein protein P. Before encapsidation, the newly synthesized free N protein, so-called N0, is chaperoned by P. The chain is Nucleoprotein (NP) from Canis lupus familiaris (Dog).